Reading from the N-terminus, the 532-residue chain is ATP synthase subunit alpha (532 aa).

Gly-171 to Thr-178 contributes to the ATP binding site.

The protein belongs to the ATPase alpha/beta chains family. As to quaternary structure, F-type ATPases have 2 components, CF(1) - the catalytic core - and CF(0) - the membrane proton channel. CF(1) has five subunits: alpha(3), beta(3), gamma(1), delta(1), epsilon(1). CF(0) has three main subunits: a(1), b(2) and c(9-12). The alpha and beta chains form an alternating ring which encloses part of the gamma chain. CF(1) is attached to CF(0) by a central stalk formed by the gamma and epsilon chains, while a peripheral stalk is formed by the delta and b chains.

The protein localises to the cell membrane. The enzyme catalyses ATP + H2O + 4 H(+)(in) = ADP + phosphate + 5 H(+)(out). Produces ATP from ADP in the presence of a proton gradient across the membrane. The alpha chain is a regulatory subunit. This is ATP synthase subunit alpha from Amoebophilus asiaticus (strain 5a2).